Consider the following 296-residue polypeptide: Probable endonuclease 4 (296 aa).

H69, H109, E160, D194, H197, H231, D244, H246, and E276 together coordinate Zn(2+).

It belongs to the AP endonuclease 2 family. It depends on Zn(2+) as a cofactor.

It carries out the reaction Endonucleolytic cleavage to 5'-phosphooligonucleotide end-products.. Endonuclease IV plays a role in DNA repair. It cleaves phosphodiester bonds at apurinic or apyrimidinic (AP) sites, generating a 3'-hydroxyl group and a 5'-terminal sugar phosphate. The sequence is that of Probable endonuclease 4 from Sulfurovum sp. (strain NBC37-1).